Reading from the N-terminus, the 510-residue chain is Nucleosome assembly protein 1-like 3 (510 aa).

Disordered regions lie at residues 1-99 and 161-311; these read MAEA…LGTN and PTEE…KRED. The segment covering 35–74 has biased composition (low complexity); that stretch reads SSSSSSSTSGSSSSSSTSGSSSSSGSGSSSSSSGSGSTSS. Residues 161 to 182 are compositionally biased toward acidic residues; that stretch reads PTEEECEWNSEDEEFSSDEEVQ. Composition is skewed to basic and acidic residues over residues 200-229, 235-246, and 254-300; these read PKENPEVKAEEKEVPKEIPEVKDEEKEVPK, KAEEKADSKDCM, and EDPK…VDLK.

Belongs to the nucleosome assembly protein (NAP) family.

The protein localises to the nucleus. The chain is Nucleosome assembly protein 1-like 3 (NAP1L3) from Pongo abelii (Sumatran orangutan).